Here is a 122-residue protein sequence, read N- to C-terminus: Aspartate 1-decarboxylase (122 aa).

Catalysis depends on Ser25, which acts as the Schiff-base intermediate with substrate; via pyruvic acid. Pyruvic acid (Ser) is present on Ser25. Thr57 lines the substrate pocket. Catalysis depends on Tyr58, which acts as the Proton donor. 73–75 (GAA) lines the substrate pocket.

It belongs to the PanD family. As to quaternary structure, heterooctamer of four alpha and four beta subunits. Pyruvate serves as cofactor. Is synthesized initially as an inactive proenzyme, which is activated by self-cleavage at a specific serine bond to produce a beta-subunit with a hydroxyl group at its C-terminus and an alpha-subunit with a pyruvoyl group at its N-terminus.

It is found in the cytoplasm. It carries out the reaction L-aspartate + H(+) = beta-alanine + CO2. The protein operates within cofactor biosynthesis; (R)-pantothenate biosynthesis; beta-alanine from L-aspartate: step 1/1. Its function is as follows. Catalyzes the pyruvoyl-dependent decarboxylation of aspartate to produce beta-alanine. This chain is Aspartate 1-decarboxylase, found in Bordetella avium (strain 197N).